A 360-amino-acid polypeptide reads, in one-letter code: DNA replication and repair protein RecF (360 aa).

G30–T37 contacts ATP.

It belongs to the RecF family.

It localises to the cytoplasm. In terms of biological role, the RecF protein is involved in DNA metabolism; it is required for DNA replication and normal SOS inducibility. RecF binds preferentially to single-stranded, linear DNA. It also seems to bind ATP. This is DNA replication and repair protein RecF from Lachnoclostridium phytofermentans (strain ATCC 700394 / DSM 18823 / ISDg) (Clostridium phytofermentans).